Consider the following 358-residue polypeptide: Holliday junction branch migration complex subunit RuvB (358 aa).

Residues 1–24 (MAIKRSHNSPPATEENLLTPNPTI) are disordered. Positions 8–22 (NSPPATEENLLTPNP) are enriched in polar residues. A large ATPase domain (RuvB-L) region spans residues 13–195 (TEENLLTPNP…FGLIQRLRFY (183 aa)). Residues Ile-34, Arg-35, Gly-76, Lys-79, Thr-80, Thr-81, 142-144 (EDY), Arg-185, Tyr-195, and Arg-232 each bind ATP. Mg(2+) is bound at residue Thr-80. Positions 196–266 (AVEELTAIIL…LAAEGLNQLN (71 aa)) are small ATPAse domain (RuvB-S). Residues 269–358 (SMGLDWTDRL…KDRSLPLFEF (90 aa)) are head domain (RuvB-H). Residues Arg-324 and Arg-329 each coordinate DNA.

Belongs to the RuvB family. In terms of assembly, homohexamer. Forms an RuvA(8)-RuvB(12)-Holliday junction (HJ) complex. HJ DNA is sandwiched between 2 RuvA tetramers; dsDNA enters through RuvA and exits via RuvB. An RuvB hexamer assembles on each DNA strand where it exits the tetramer. Each RuvB hexamer is contacted by two RuvA subunits (via domain III) on 2 adjacent RuvB subunits; this complex drives branch migration. In the full resolvosome a probable DNA-RuvA(4)-RuvB(12)-RuvC(2) complex forms which resolves the HJ.

It localises to the cytoplasm. The enzyme catalyses ATP + H2O = ADP + phosphate + H(+). The RuvA-RuvB-RuvC complex processes Holliday junction (HJ) DNA during genetic recombination and DNA repair, while the RuvA-RuvB complex plays an important role in the rescue of blocked DNA replication forks via replication fork reversal (RFR). RuvA specifically binds to HJ cruciform DNA, conferring on it an open structure. The RuvB hexamer acts as an ATP-dependent pump, pulling dsDNA into and through the RuvAB complex. RuvB forms 2 homohexamers on either side of HJ DNA bound by 1 or 2 RuvA tetramers; 4 subunits per hexamer contact DNA at a time. Coordinated motions by a converter formed by DNA-disengaged RuvB subunits stimulates ATP hydrolysis and nucleotide exchange. Immobilization of the converter enables RuvB to convert the ATP-contained energy into a lever motion, pulling 2 nucleotides of DNA out of the RuvA tetramer per ATP hydrolyzed, thus driving DNA branch migration. The RuvB motors rotate together with the DNA substrate, which together with the progressing nucleotide cycle form the mechanistic basis for DNA recombination by continuous HJ branch migration. Branch migration allows RuvC to scan DNA until it finds its consensus sequence, where it cleaves and resolves cruciform DNA. This is Holliday junction branch migration complex subunit RuvB from Microcystis aeruginosa (strain NIES-843 / IAM M-2473).